The sequence spans 121 residues: Small ribosomal subunit protein uS13 (121 aa).

Positions 96–121 (PVRGQNTKNNARTRKGKAVAIAGKKK) are disordered. Residues 106-121 (ARTRKGKAVAIAGKKK) show a composition bias toward basic residues.

The protein belongs to the universal ribosomal protein uS13 family. In terms of assembly, part of the 30S ribosomal subunit. Forms a loose heterodimer with protein S19. Forms two bridges to the 50S subunit in the 70S ribosome.

Functionally, located at the top of the head of the 30S subunit, it contacts several helices of the 16S rRNA. In the 70S ribosome it contacts the 23S rRNA (bridge B1a) and protein L5 of the 50S subunit (bridge B1b), connecting the 2 subunits; these bridges are implicated in subunit movement. Contacts the tRNAs in the A and P-sites. The polypeptide is Small ribosomal subunit protein uS13 (Streptococcus pyogenes serotype M3 (strain SSI-1)).